The primary structure comprises 214 residues: Leucyl/phenylalanyl-tRNA--protein transferase (214 aa).

This sequence belongs to the L/F-transferase family.

The protein resides in the cytoplasm. The catalysed reaction is N-terminal L-lysyl-[protein] + L-leucyl-tRNA(Leu) = N-terminal L-leucyl-L-lysyl-[protein] + tRNA(Leu) + H(+). The enzyme catalyses N-terminal L-arginyl-[protein] + L-leucyl-tRNA(Leu) = N-terminal L-leucyl-L-arginyl-[protein] + tRNA(Leu) + H(+). It catalyses the reaction L-phenylalanyl-tRNA(Phe) + an N-terminal L-alpha-aminoacyl-[protein] = an N-terminal L-phenylalanyl-L-alpha-aminoacyl-[protein] + tRNA(Phe). Functionally, functions in the N-end rule pathway of protein degradation where it conjugates Leu, Phe and, less efficiently, Met from aminoacyl-tRNAs to the N-termini of proteins containing an N-terminal arginine or lysine. In Cereibacter sphaeroides (strain ATCC 17029 / ATH 2.4.9) (Rhodobacter sphaeroides), this protein is Leucyl/phenylalanyl-tRNA--protein transferase.